Reading from the N-terminus, the 444-residue chain is sn-glycerol-3-phosphate-binding periplasmic protein UgpB (444 aa).

The first 30 residues, 1–30 (MFNNTIRKTHAIRTAAACVAFALMSAGAQA), serve as a signal peptide directing secretion. Positions 72, 96, 151, 277, 314, 353, and 404 each coordinate sn-glycerol 3-phosphate.

It belongs to the bacterial solute-binding protein 1 family. As to quaternary structure, the complex is composed of two ATP-binding proteins (UgpC), two transmembrane proteins (UgpA and UgpE) and a solute-binding protein (UgpB).

It is found in the periplasm. Functionally, part of the ABC transporter complex UgpBAEC involved in sn-glycerol-3-phosphate (G3P) import. Binds G3P. The chain is sn-glycerol-3-phosphate-binding periplasmic protein UgpB (ugpB) from Pectobacterium atrosepticum (strain SCRI 1043 / ATCC BAA-672) (Erwinia carotovora subsp. atroseptica).